A 264-amino-acid chain; its full sequence is Small ribosomal subunit protein eS1B (264 aa).

The interval 233–264 (GEGGGSGKPAADETGAKVERADGYEPPVQESV) is disordered. Positions 242–255 (AADETGAKVERADG) are enriched in basic and acidic residues.

Belongs to the eukaryotic ribosomal protein eS1 family. In terms of assembly, component of the small ribosomal subunit. Mature ribosomes consist of a small (40S) and a large (60S) subunit. The 40S subunit contains about 33 different proteins and 1 molecule of RNA (18S). The 60S subunit contains about 49 different proteins and 3 molecules of RNA (28S, 5.8S and 5S). Part of the small subunit (SSU) processome, composed of more than 70 proteins and the RNA chaperone small nucleolar RNA (snoRNA) U3.

The protein localises to the cytoplasm. The protein resides in the nucleus. Its subcellular location is the nucleolus. Functionally, component of the small ribosomal subunit. The ribosome is a large ribonucleoprotein complex responsible for the synthesis of proteins in the cell. Part of the small subunit (SSU) processome, first precursor of the small eukaryotic ribosomal subunit. During the assembly of the SSU processome in the nucleolus, many ribosome biogenesis factors, an RNA chaperone and ribosomal proteins associate with the nascent pre-rRNA and work in concert to generate RNA folding, modifications, rearrangements and cleavage as well as targeted degradation of pre-ribosomal RNA by the RNA exosome. May play a role during erythropoiesis. The protein is Small ribosomal subunit protein eS1B (rps3a-b) of Xenopus laevis (African clawed frog).